The sequence spans 231 residues: Large ribosomal subunit protein uL1 (231 aa).

Belongs to the universal ribosomal protein uL1 family. As to quaternary structure, part of the 50S ribosomal subunit.

Binds directly to 23S rRNA. The L1 stalk is quite mobile in the ribosome, and is involved in E site tRNA release. Functionally, protein L1 is also a translational repressor protein, it controls the translation of the L11 operon by binding to its mRNA. The chain is Large ribosomal subunit protein uL1 from Neisseria meningitidis serogroup C (strain 053442).